The chain runs to 77 residues: Translational regulator CsrA (77 aa).

Residues 58–77 are disordered; sequence ANRRTAEETLDQASRLLSQK. Positions 68–77 are enriched in polar residues; the sequence is DQASRLLSQK.

This sequence belongs to the CsrA/RsmA family. In terms of assembly, homodimer; the beta-strands of each monomer intercalate to form a hydrophobic core, while the alpha-helices form wings that extend away from the core.

Its subcellular location is the cytoplasm. Functionally, a translational regulator that binds mRNA to regulate translation initiation and/or mRNA stability. Usually binds in the 5'-UTR at or near the Shine-Dalgarno sequence preventing ribosome-binding, thus repressing translation. Its main target seems to be the major flagellin gene, while its function is anatagonized by FliW. The polypeptide is Translational regulator CsrA (Magnetococcus marinus (strain ATCC BAA-1437 / JCM 17883 / MC-1)).